Consider the following 158-residue polypeptide: 6,7-dimethyl-8-ribityllumazine synthase (158 aa).

5-amino-6-(D-ribitylamino)uracil contacts are provided by residues Phe-22, 57-59 (AVE), and 81-83 (AVI). 86–87 (GT) is a (2S)-2-hydroxy-3-oxobutyl phosphate binding site. His-89 serves as the catalytic Proton donor. Residue Phe-114 coordinates 5-amino-6-(D-ribitylamino)uracil. Arg-128 contacts (2S)-2-hydroxy-3-oxobutyl phosphate.

Belongs to the DMRL synthase family. As to quaternary structure, forms an icosahedral capsid composed of 60 subunits, arranged as a dodecamer of pentamers.

It catalyses the reaction (2S)-2-hydroxy-3-oxobutyl phosphate + 5-amino-6-(D-ribitylamino)uracil = 6,7-dimethyl-8-(1-D-ribityl)lumazine + phosphate + 2 H2O + H(+). It functions in the pathway cofactor biosynthesis; riboflavin biosynthesis; riboflavin from 2-hydroxy-3-oxobutyl phosphate and 5-amino-6-(D-ribitylamino)uracil: step 1/2. Its function is as follows. Catalyzes the formation of 6,7-dimethyl-8-ribityllumazine by condensation of 5-amino-6-(D-ribitylamino)uracil with 3,4-dihydroxy-2-butanone 4-phosphate. This is the penultimate step in the biosynthesis of riboflavin. The polypeptide is 6,7-dimethyl-8-ribityllumazine synthase (Shewanella pealeana (strain ATCC 700345 / ANG-SQ1)).